The primary structure comprises 68 residues: DNA gyrase inhibitor YacG (68 aa).

Positions 10, 13, 29, and 33 each coordinate Zn(2+).

It belongs to the DNA gyrase inhibitor YacG family. As to quaternary structure, interacts with GyrB. The cofactor is Zn(2+).

In terms of biological role, inhibits all the catalytic activities of DNA gyrase by preventing its interaction with DNA. Acts by binding directly to the C-terminal domain of GyrB, which probably disrupts DNA binding by the gyrase. The chain is DNA gyrase inhibitor YacG from Haemophilus influenzae (strain PittGG).